Reading from the N-terminus, the 456-residue chain is Adenylosuccinate lyase (456 aa).

N(6)-(1,2-dicarboxyethyl)-AMP contacts are provided by residues 15–16 (RY), 90–92 (NHD), and 122–123 (TS). Residue H171 is the Proton donor/acceptor of the active site. Q248 is a binding site for N(6)-(1,2-dicarboxyethyl)-AMP. Residue S296 is the Proton donor/acceptor of the active site. N(6)-(1,2-dicarboxyethyl)-AMP contacts are provided by residues S297, 302 to 304 (KVN), N310, R336, and 341 to 345 (STVLR).

The protein belongs to the lyase 1 family. Adenylosuccinate lyase subfamily. Homotetramer. Residues from neighboring subunits contribute catalytic and substrate-binding residues to each active site.

It catalyses the reaction N(6)-(1,2-dicarboxyethyl)-AMP = fumarate + AMP. The catalysed reaction is (2S)-2-[5-amino-1-(5-phospho-beta-D-ribosyl)imidazole-4-carboxamido]succinate = 5-amino-1-(5-phospho-beta-D-ribosyl)imidazole-4-carboxamide + fumarate. The protein operates within purine metabolism; AMP biosynthesis via de novo pathway; AMP from IMP: step 2/2. It participates in purine metabolism; IMP biosynthesis via de novo pathway; 5-amino-1-(5-phospho-D-ribosyl)imidazole-4-carboxamide from 5-amino-1-(5-phospho-D-ribosyl)imidazole-4-carboxylate: step 2/2. Functionally, catalyzes two reactions in de novo purine nucleotide biosynthesis. Catalyzes the breakdown of 5-aminoimidazole- (N-succinylocarboxamide) ribotide (SAICAR or 2-[5-amino-1-(5-phospho-beta-D-ribosyl)imidazole-4-carboxamido]succinate) to 5-aminoimidazole-4-carboxamide ribotide (AICAR or 5-amino-1-(5-phospho-beta-D-ribosyl)imidazole-4-carboxamide) and fumarate, and of adenylosuccinate (ADS or N(6)-(1,2-dicarboxyethyl)-AMP) to adenosine monophosphate (AMP) and fumarate. This Pseudomonas aeruginosa (strain ATCC 15692 / DSM 22644 / CIP 104116 / JCM 14847 / LMG 12228 / 1C / PRS 101 / PAO1) protein is Adenylosuccinate lyase (purB).